A 670-amino-acid chain; its full sequence is DNA ligase (670 aa).

NAD(+)-binding positions include 32–36, 81–82, and E114; these read DSEYD and SL. Catalysis depends on K116, which acts as the N6-AMP-lysine intermediate. Residues R137, E174, K291, and K315 each contribute to the NAD(+) site. Residues C409, C412, C427, and C433 each contribute to the Zn(2+) site. Residues 592–670 enclose the BRCT domain; that stretch reads ASENLFKDKT…EEEFLAQITR (79 aa).

Belongs to the NAD-dependent DNA ligase family. LigA subfamily. Mg(2+) is required as a cofactor. The cofactor is Mn(2+).

The enzyme catalyses NAD(+) + (deoxyribonucleotide)n-3'-hydroxyl + 5'-phospho-(deoxyribonucleotide)m = (deoxyribonucleotide)n+m + AMP + beta-nicotinamide D-nucleotide.. DNA ligase that catalyzes the formation of phosphodiester linkages between 5'-phosphoryl and 3'-hydroxyl groups in double-stranded DNA using NAD as a coenzyme and as the energy source for the reaction. It is essential for DNA replication and repair of damaged DNA. This Haemophilus influenzae (strain ATCC 51907 / DSM 11121 / KW20 / Rd) protein is DNA ligase.